The following is a 766-amino-acid chain: MTITHNLGFPRIGAQRELKRAVEAYWAGKQTADELLATGRALRAAHWRRQADSGLRFVPVGDFAWYDHILEWTTLLGAVPARFAQPETQAVSLDTLFRMGRGRAPSGKPAAACEMTKWFDTNYHYIVPELVPGQTYRIAREDLFEQVREAQALGYAVKPVIPGPLTWLYLGKGDAFQQGASDEDKLKLLANLLPVYQQVLKRLADQGVEWVQIDEPILALDLPAAWRDAFGLAYAQLAGSPVKVLLATYFDGLKDNLSTVTKLPVAGLHVDLVRAPEQLDDVVEALHADQVLSAGVINGRNVWRTDLDQALRKLEPVARQLGDRLWLAPSCSLLHVPVDLLAETELDAELKSWLSFASQKLDELSLLGRALDGDSSQAVQEGLAAQRAALAARRSSPRIHNPAVGRRMAASEQVSRDRAPFAERIRQQQARLNLPPFPTTTIGSFPQTAEIRGLRRDWKSGALSDSTYEALIRKEIEAVIRFQEKVGLDVLVHGEPERNDMVEYFGELLAGFAFTKNGWVQSYGSRCVKPPIIFGDVARPAPMTVGWSSYAQSLTDKPVKGMLTGPVTILQWSFVRDDQPREATCRQLALALRDEVLDLEKAGVKVIQIDEPAIREGLPLRRADWQAYLDWAVDCFRLSTAGVADDTQIHTHMCYSEFNDIIESIAAMDADVITIETSRSNMELLKAFEDFHYPNDIGPGVYDIHSPNVPDVDWMVGLMQKAGANLSKERLWVNPDCGLKTRAWPETEAALISMVQAARTLRQATS.

5-methyltetrahydropteroyltri-L-glutamate-binding positions include 16-19 (RELK) and Lys-117. L-homocysteine contacts are provided by residues 442–444 (IGS) and Glu-495. L-methionine-binding positions include 442 to 444 (IGS) and Glu-495. Residues 526 to 527 (RC) and Trp-572 contribute to the 5-methyltetrahydropteroyltri-L-glutamate site. An L-homocysteine-binding site is contributed by Asp-610. Asp-610 serves as a coordination point for L-methionine. A 5-methyltetrahydropteroyltri-L-glutamate-binding site is contributed by Glu-616. Zn(2+)-binding residues include His-652, Cys-654, and Glu-676. His-705 functions as the Proton donor in the catalytic mechanism. Cys-737 provides a ligand contact to Zn(2+).

The protein belongs to the vitamin-B12 independent methionine synthase family. Requires Zn(2+) as cofactor.

It catalyses the reaction 5-methyltetrahydropteroyltri-L-glutamate + L-homocysteine = tetrahydropteroyltri-L-glutamate + L-methionine. The protein operates within amino-acid biosynthesis; L-methionine biosynthesis via de novo pathway; L-methionine from L-homocysteine (MetE route): step 1/1. Its function is as follows. Catalyzes the transfer of a methyl group from 5-methyltetrahydrofolate to homocysteine resulting in methionine formation. The sequence is that of 5-methyltetrahydropteroyltriglutamate--homocysteine methyltransferase from Bordetella avium (strain 197N).